We begin with the raw amino-acid sequence, 192 residues long: Ion-translocating oxidoreductase complex subunit B (192 aa).

The segment at 1 to 26 (MNTIWIAVGALTLLGLVFGAILGYAS) is hydrophobic. The region spanning 32-91 (EDDPVVEKIDAILPQSQCGQCGYPGCRPYAEAVGLQGEKINRCAPGGEAVMLKIAELLNV) is the 4Fe-4S domain. C49, C52, C57, C74, C117, C120, C123, C127, C147, C150, C153, and C157 together coordinate [4Fe-4S] cluster. 4Fe-4S ferredoxin-type domains are found at residues 108 to 137 (MLAVIDENNCIGCTKCIQACPVDAIVGATR) and 138 to 167 (AMHTVMSDLCTGCNLCVDPCPTHCIELRPV).

The protein belongs to the 4Fe4S bacterial-type ferredoxin family. RnfB subfamily. In terms of assembly, the complex is composed of six subunits: RsxA, RsxB, RsxC, RsxD, RsxE and RsxG. [4Fe-4S] cluster is required as a cofactor.

It is found in the cell inner membrane. Its function is as follows. Part of a membrane-bound complex that couples electron transfer with translocation of ions across the membrane. Required to maintain the reduced state of SoxR. In Salmonella dublin (strain CT_02021853), this protein is Ion-translocating oxidoreductase complex subunit B.